We begin with the raw amino-acid sequence, 759 residues long: RNA-binding protein 28 (759 aa).

A2 bears the N-acetylalanine mark. An RRM 1 domain is found at 4–80 (LTLFVGRLPP…CKINVTVAKK (77 aa)). Residues 84-105 (NKTKEKGKNENSECPKKEPKAK) form a disordered region. Over residues 85–101 (KTKEKGKNENSECPKKE) the composition is skewed to basic and acidic residues. The 78-residue stretch at 114–191 (ARLIIRNLSF…RTVAVDWAVA (78 aa)) folds into the RRM 2 domain. S122 is subject to Phosphoserine. The disordered stretch occupies residues 201-330 (VSAIGEEKSH…NKKKRKLPSD (130 aa)). A compositionally biased stretch (basic and acidic residues) spans 205–224 (GEEKSHESKHQESVKKKGRE). Acidic residues-rich tracts occupy residues 225-256 (EEDM…EEEN) and 284-313 (SEED…EEQE). 2 RRM domains span residues 335-419 (KTVF…LAVT) and 487-597 (TRLC…RSLQ). At S397 the chain carries Phosphoserine. The tract at residues 594-759 (RSLQKMRSKP…LAKRSKWFDS (166 aa)) is disordered. Positions 615-640 (PAKDQQQKAAQHHTEEQSKVPPEQKR) are enriched in basic and acidic residues. A Glycyl lysine isopeptide (Lys-Gly) (interchain with G-Cter in SUMO2) cross-link involves residue K653. Over residues 689–698 (VKPVHPKKPK) the composition is skewed to basic residues. A compositionally biased stretch (polar residues) spans 700–715 (QINQWKQEKQQLSSEQ).

As to quaternary structure, interacts with U1, U2, U4, U5, and U6 spliceosomal small nuclear RNAs (snRNAs). Ubiquitously expressed.

The protein resides in the nucleus. The protein localises to the nucleolus. Its function is as follows. Nucleolar component of the spliceosomal ribonucleoprotein complexes. The protein is RNA-binding protein 28 (RBM28) of Homo sapiens (Human).